Here is a 123-residue protein sequence, read N- to C-terminus: UPF0102 protein Pput_4400 (123 aa).

The protein belongs to the UPF0102 family.

This is UPF0102 protein Pput_4400 from Pseudomonas putida (strain ATCC 700007 / DSM 6899 / JCM 31910 / BCRC 17059 / LMG 24140 / F1).